A 131-amino-acid polypeptide reads, in one-letter code: Fumarate reductase subunit C (131 aa).

The next 3 membrane-spanning stretches (helical) occupy residues 30-50 (EGTCLPQLWFSLVVLFGVFAL), 58-78 (AGFVGFLSNPIVMLINIVTLI), and 109-129 (IVRGLWGLTIVVTVVILAVAL).

This sequence belongs to the FrdC family. In terms of assembly, part of an enzyme complex containing four subunits: a flavoprotein (FrdA), an iron-sulfur protein (FrdB), and two hydrophobic anchor proteins (FrdC and FrdD).

Its subcellular location is the cell inner membrane. Two distinct, membrane-bound, FAD-containing enzymes are responsible for the catalysis of fumarate and succinate interconversion; fumarate reductase is used in anaerobic growth, and succinate dehydrogenase is used in aerobic growth. Anchors the catalytic components of the fumarate reductase complex to the cell inner membrane, binds quinones. This chain is Fumarate reductase subunit C, found in Proteus mirabilis (strain HI4320).